Here is a 168-residue protein sequence, read N- to C-terminus: Phosphopantetheine adenylyltransferase (168 aa).

A substrate-binding site is contributed by Ser-9. ATP contacts are provided by residues Ser-9 to Phe-10 and His-17. Lys-41, Leu-73, and Arg-87 together coordinate substrate. Residues Gly-88–Arg-90, Glu-98, and Tyr-123–Ser-129 contribute to the ATP site.

This sequence belongs to the bacterial CoaD family. Homohexamer. It depends on Mg(2+) as a cofactor.

Its subcellular location is the cytoplasm. It catalyses the reaction (R)-4'-phosphopantetheine + ATP + H(+) = 3'-dephospho-CoA + diphosphate. It participates in cofactor biosynthesis; coenzyme A biosynthesis; CoA from (R)-pantothenate: step 4/5. Functionally, reversibly transfers an adenylyl group from ATP to 4'-phosphopantetheine, yielding dephospho-CoA (dPCoA) and pyrophosphate. The protein is Phosphopantetheine adenylyltransferase of Heliobacterium modesticaldum (strain ATCC 51547 / Ice1).